The chain runs to 475 residues: Ribulose bisphosphate carboxylase large chain (475 aa).

Positions 1–2 (MS) are excised as a propeptide. Pro-3 is subject to N-acetylproline. At Lys-14 the chain carries N6,N6,N6-trimethyllysine. Substrate contacts are provided by Asn-123 and Thr-173. Residue Lys-175 is the Proton acceptor of the active site. Lys-177 lines the substrate pocket. Residues Lys-201, Asp-203, and Glu-204 each contribute to the Mg(2+) site. Lys-201 carries the N6-carboxylysine modification. Residue His-294 is the Proton acceptor of the active site. Substrate is bound by residues Arg-295, His-327, and Ser-379.

Belongs to the RuBisCO large chain family. Type I subfamily. As to quaternary structure, heterohexadecamer of 8 large chains and 8 small chains; disulfide-linked. The disulfide link is formed within the large subunit homodimers. The cofactor is Mg(2+). In terms of processing, the disulfide bond which can form in the large chain dimeric partners within the hexadecamer appears to be associated with oxidative stress and protein turnover.

It localises to the plastid. The protein resides in the chloroplast. The catalysed reaction is 2 (2R)-3-phosphoglycerate + 2 H(+) = D-ribulose 1,5-bisphosphate + CO2 + H2O. It catalyses the reaction D-ribulose 1,5-bisphosphate + O2 = 2-phosphoglycolate + (2R)-3-phosphoglycerate + 2 H(+). RuBisCO catalyzes two reactions: the carboxylation of D-ribulose 1,5-bisphosphate, the primary event in carbon dioxide fixation, as well as the oxidative fragmentation of the pentose substrate in the photorespiration process. Both reactions occur simultaneously and in competition at the same active site. The protein is Ribulose bisphosphate carboxylase large chain of Alnus incana (White alder).